Consider the following 986-residue polypeptide: Ankyrin repeat, PH and SEC7 domain containing protein secG (986 aa).

A compositionally biased stretch (low complexity) spans 1-28; the sequence is MGSTSNSTKNTGSTTTTTTTAAPATTAK. The interval 1–43 is disordered; the sequence is MGSTSNSTKNTGSTTTTTTTAAPATTAKHSNSAPTRPSVHYYS. Residues 29–43 show a composition bias toward polar residues; the sequence is HSNSAPTRPSVHYYS. 15 ANK repeats span residues 34–63, 68–97, 101–131, 135–164, 168–197, 201–230, 234–263, 267–296, 300–329, 334–363, 367–396, 400–429, 433–462, 466–495, and 499–528; these read PTRP…TSPD, EKRT…NANI, AGNT…DVNT, KNGT…DPRA, NGET…KVNA, DCIT…KVDP, HGIS…NINC, EGVT…KINM, MGET…TMID, RQST…QINI, EGAT…PICI, QGAT…ELEV, QGGT…NVNA, HSST…RIDA, and AGKT…DLDQ. The SEC7 domain maps to 580-770; that stretch reads QLAAEKQKLL…ENLYDKIVTN (191 aa). Positions 784–895 constitute a PH domain; it reads HVEKKGWLTK…WVQSIKSNIH (112 aa). Residues 911-986 form a disordered region; the sequence is IRGRGKVSTK…PVQQQTSALS (76 aa). A compositionally biased stretch (polar residues) spans 920–929; sequence KPIQNRKQTI. Low complexity-rich tracts occupy residues 936–953 and 963–986; these read TTTT…SVGS and SSGS…SALS.

This chain is Ankyrin repeat, PH and SEC7 domain containing protein secG (secG), found in Dictyostelium discoideum (Social amoeba).